Reading from the N-terminus, the 147-residue chain is MRGSELSLLLLALVLCQAPRGPAAPVSTGAGGGTVLAKMYPRGSHWAVGHLMGKKSTDELPPLYAADRDGLKEQLRGYIRWEEAARNLLGLLEAAGNRSHQPPQDQPLGSLQPTWDPEDGSYFSDAQNAKLVDSLLQVLKGKEGTAS.

Residues 1-23 (MRGSELSLLLLALVLCQAPRGPA) form the signal peptide. Methionine amide is present on Met-52. Residues 56–147 (STDELPPLYA…VLKGKEGTAS (92 aa)) constitute a propeptide that is removed on maturation. The segment at 95–123 (AGNRSHQPPQDQPLGSLQPTWDPEDGSYF) is disordered. Positions 98–113 (RSHQPPQDQPLGSLQP) are enriched in polar residues.

The protein belongs to the bombesin/neuromedin-B/ranatensin family. In terms of tissue distribution, expressed in several dozen cells in the dorsal retrotrapezoid nucleus/parafacial respiratory group (at protein level).

Its subcellular location is the secreted. The protein resides in the cytoplasmic vesicle. The protein localises to the secretory vesicle lumen. It is found in the cell projection. It localises to the neuron projection. Stimulates the release of gastrin and other gastrointestinal hormones. Contributes to the perception of prurient stimuli and to the transmission of itch signals in the spinal cord that promote scratching behavior. Contributes primarily to nonhistaminergic itch sensation. In one study, shown to act in the amygdala as part of an inhibitory network which inhibits memory specifically related to learned fear. In another study, shown to act on vasoactive intestinal peptide (VIP)-expressing cells in the auditory cortex, most likely via extrasynaptic diffusion from local and long-range sources, to mediate disinhibition of glutamatergic cells via VIP cell-specific GRPR signaling which leads to enhanced auditory fear memories. Contributes to the regulation of food intake. Inhibits voltage-gated sodium channels but enhances voltage-gated potassium channels in hippocampal neurons. Induces sighing by acting directly on the pre-Botzinger complex, a cluster of several thousand neurons in the ventrolateral medulla responsible for inspiration during respiratory activity. Its function is as follows. Induces an itch response through activation of receptors present on mast cells, triggering mast cell degranulation. In Rattus norvegicus (Rat), this protein is Gastrin-releasing peptide (Grp).